Consider the following 698-residue polypeptide: Elongation factor G (698 aa).

The 277-residue stretch at Ala-8–Leu-284 folds into the tr-type G domain. GTP contacts are provided by residues Ala-17–Thr-24, Asp-81–His-85, and Asn-135–Asp-138.

It belongs to the TRAFAC class translation factor GTPase superfamily. Classic translation factor GTPase family. EF-G/EF-2 subfamily.

Its subcellular location is the cytoplasm. Catalyzes the GTP-dependent ribosomal translocation step during translation elongation. During this step, the ribosome changes from the pre-translocational (PRE) to the post-translocational (POST) state as the newly formed A-site-bound peptidyl-tRNA and P-site-bound deacylated tRNA move to the P and E sites, respectively. Catalyzes the coordinated movement of the two tRNA molecules, the mRNA and conformational changes in the ribosome. The sequence is that of Elongation factor G from Salinispora tropica (strain ATCC BAA-916 / DSM 44818 / JCM 13857 / NBRC 105044 / CNB-440).